The primary structure comprises 156 residues: ATP synthase subunit b (156 aa).

Residues 3-23 traverse the membrane as a helical segment; it reads ITLTIFAQALAFAGLIWIVAT.

It belongs to the ATPase B chain family. F-type ATPases have 2 components, F(1) - the catalytic core - and F(0) - the membrane proton channel. F(1) has five subunits: alpha(3), beta(3), gamma(1), delta(1), epsilon(1). F(0) has three main subunits: a(1), b(2) and c(10-14). The alpha and beta chains form an alternating ring which encloses part of the gamma chain. F(1) is attached to F(0) by a central stalk formed by the gamma and epsilon chains, while a peripheral stalk is formed by the delta and b chains.

Its subcellular location is the cell inner membrane. In terms of biological role, f(1)F(0) ATP synthase produces ATP from ADP in the presence of a proton or sodium gradient. F-type ATPases consist of two structural domains, F(1) containing the extramembraneous catalytic core and F(0) containing the membrane proton channel, linked together by a central stalk and a peripheral stalk. During catalysis, ATP synthesis in the catalytic domain of F(1) is coupled via a rotary mechanism of the central stalk subunits to proton translocation. Its function is as follows. Component of the F(0) channel, it forms part of the peripheral stalk, linking F(1) to F(0). In Xanthomonas campestris pv. campestris (strain 8004), this protein is ATP synthase subunit b.